A 196-amino-acid polypeptide reads, in one-letter code: uncharacterized protein (196 aa).

FAD-binding positions include 15–22 (SQGKFNKT), 68–71 (GWWM), Tyr-107, and 123–126 (TWNA).

Belongs to the oxidoreductase MdaB family. It depends on FAD as a cofactor.

This is an uncharacterized protein from Schizosaccharomyces pombe (strain 972 / ATCC 24843) (Fission yeast).